The chain runs to 92 residues: UPF0250 protein CGSHiEE_03170 (92 aa).

The protein belongs to the UPF0250 family.

In Haemophilus influenzae (strain PittEE), this protein is UPF0250 protein CGSHiEE_03170.